Reading from the N-terminus, the 318-residue chain is Mediator of RNA polymerase II transcription subunit 3 (318 aa).

Residues 134–156 are compositionally biased toward polar residues; sequence SAAGITKTSSGNDGNTTGSTANT. Positions 134–225 are disordered; that stretch reads SAAGITKTSS…PSLKQIPNTQ (92 aa). A compositionally biased stretch (low complexity) spans 192-217; the sequence is HTGPATAPTTSNSAASAAAAAANTPS.

This sequence belongs to the Mediator complex subunit 3 family. As to quaternary structure, component of the Mediator complex.

The protein localises to the nucleus. Functionally, component of the Mediator complex, a coactivator involved in regulated gene transcription of nearly all RNA polymerase II-dependent genes. Mediator functions as a bridge to convey information from gene-specific regulatory proteins to the basal RNA polymerase II transcription machinery. Mediator is recruited to promoters by direct interactions with regulatory proteins and serves as a scaffold for the assembly of a functional preinitiation complex with RNA polymerase II and the general transcription factors. The polypeptide is Mediator of RNA polymerase II transcription subunit 3 (PGD1) (Kluyveromyces lactis (strain ATCC 8585 / CBS 2359 / DSM 70799 / NBRC 1267 / NRRL Y-1140 / WM37) (Yeast)).